The following is a 114-amino-acid chain: Ig kappa chain V-I region S107A (114 aa).

The framework-1 stretch occupies residues 1 to 23 (DIVMTQSPTFLAVTASKKVTISC). The cysteines at positions 23 and 94 are disulfide-linked. The segment at 24-40 (TASESLYSSKHKVHYLA) is complementarity-determining-1. Residues 41–55 (WYQKKPEQSPKLLIY) are framework-2. Residues 56–62 (GASNRYI) are complementarity-determining-2. The segment at 63–94 (GVPDRFTGSGSGTDFTLTISSVQVEDLTHYYC) is framework-3. The complementarity-determining-3 stretch occupies residues 95–103 (AQFYSYPLT). Positions 104 to 113 (FGAGTKLELK) are framework-4.

Functionally, anti-phosphocholine antibody. The chain is Ig kappa chain V-I region S107A (Igkv7-33) from Mus musculus (Mouse).